A 602-amino-acid chain; its full sequence is Elongation factor 4 (602 aa).

The 183-residue stretch at 7–189 (SKIRNFCIIA…AIVRRVPAPQ (183 aa)) folds into the tr-type G domain. GTP-binding positions include 19–24 (DHGKST) and 136–139 (NKVD).

The protein belongs to the TRAFAC class translation factor GTPase superfamily. Classic translation factor GTPase family. LepA subfamily.

It is found in the cell inner membrane. It carries out the reaction GTP + H2O = GDP + phosphate + H(+). Its function is as follows. Required for accurate and efficient protein synthesis under certain stress conditions. May act as a fidelity factor of the translation reaction, by catalyzing a one-codon backward translocation of tRNAs on improperly translocated ribosomes. Back-translocation proceeds from a post-translocation (POST) complex to a pre-translocation (PRE) complex, thus giving elongation factor G a second chance to translocate the tRNAs correctly. Binds to ribosomes in a GTP-dependent manner. This Prochlorococcus marinus (strain MIT 9312) protein is Elongation factor 4.